The following is a 226-amino-acid chain: Large ribosomal subunit protein uL1 (226 aa).

This sequence belongs to the universal ribosomal protein uL1 family. Part of the 50S ribosomal subunit.

In terms of biological role, binds directly to 23S rRNA. The L1 stalk is quite mobile in the ribosome, and is involved in E site tRNA release. Functionally, protein L1 is also a translational repressor protein, it controls the translation of the L11 operon by binding to its mRNA. The sequence is that of Large ribosomal subunit protein uL1 from Mycoplasma mycoides subsp. mycoides SC (strain CCUG 32753 / NCTC 10114 / PG1).